Here is a 173-residue protein sequence, read N- to C-terminus: T-cell receptor beta-1 chain C region (173 aa).

Residues 1 to 146 (EDLRNVTPPK…GVLSATILYE (146 aa)) are c region. The cysteines at positions 31 and 71 are disulfide-linked. 2 N-linked (GlcNAc...) asparagine glycosylation sites follow: Asn-67 and Asn-116. Residues 146–167 (EILLGKATLYAVLVSTLVVMAM) traverse the membrane as a helical segment. Topologically, residues 168 to 173 (VKRKNS) are cytoplasmic.

It is found in the membrane. This Mus musculus (Mouse) protein is T-cell receptor beta-1 chain C region.